The sequence spans 830 residues: Dimethylglycine oxidase (830 aa).

FAD-binding positions include Ile14–Val15, Asp35–Gln36, Ser45–His48, Leu52, and Val174. At His48 the chain carries Pros-8alpha-FAD histidine. Active-site residues include His225 and Tyr259. FAD contacts are provided by residues Tyr259 and Val360–Thr363. Tyr539 lines the (6S)-5,6,7,8-tetrahydrofolate pocket. Asp552 functions as the For 5,10-methylenetetrahydrofolate synthesis activity in the catalytic mechanism. (6S)-5,6,7,8-tetrahydrofolate is bound by residues Thr554, Gly566, and Glu658–Tyr660.

Belongs to the GcvT family. FAD is required as a cofactor.

It carries out the reaction N,N-dimethylglycine + O2 + H2O = sarcosine + formaldehyde + H2O2. It catalyses the reaction N,N-dimethylglycine + (6S)-5,6,7,8-tetrahydrofolate + O2 = sarcosine + (6R)-5,10-methylene-5,6,7,8-tetrahydrofolate + H2O2. Catalyzes the oxidative demethylation of N,N-dimethylglycine to yield sarcosine, formaldehyde and hydrogen peroxide. The oxidation of dimethylglycine is coupled to the synthesis of 5,10-methylenetetrahydrofolate through an unusual substrate channeling mechanism. This channeling occurs by nonbiased diffusion of the iminium intermediate through a large solvent cavity connecting active site 1 (N-terminus) and active site 2 (C-terminus). The synthesis of 5,10-methylenetetrahydrofolate (at active site 2) prevents the accumulation of formaldehyde, formed by hydrolysis of the iminium intermediate product (at active site 1). Does not oxidize sarcosine. This chain is Dimethylglycine oxidase (dmg), found in Arthrobacter globiformis.